The chain runs to 512 residues: Probable cytosol aminopeptidase (512 aa).

Residues Lys-284 and Asp-289 each coordinate Mn(2+). Lys-296 is an active-site residue. Residues Asp-307, Asp-366, and Glu-368 each coordinate Mn(2+). The active site involves Arg-370.

This sequence belongs to the peptidase M17 family. The cofactor is Mn(2+).

It is found in the cytoplasm. It carries out the reaction Release of an N-terminal amino acid, Xaa-|-Yaa-, in which Xaa is preferably Leu, but may be other amino acids including Pro although not Arg or Lys, and Yaa may be Pro. Amino acid amides and methyl esters are also readily hydrolyzed, but rates on arylamides are exceedingly low.. The enzyme catalyses Release of an N-terminal amino acid, preferentially leucine, but not glutamic or aspartic acids.. Its function is as follows. Presumably involved in the processing and regular turnover of intracellular proteins. Catalyzes the removal of unsubstituted N-terminal amino acids from various peptides. The sequence is that of Probable cytosol aminopeptidase from Cupriavidus necator (strain ATCC 17699 / DSM 428 / KCTC 22496 / NCIMB 10442 / H16 / Stanier 337) (Ralstonia eutropha).